The sequence spans 318 residues: Melanoma-associated antigen 8 (318 aa).

Residues 1-103 are disordered; that stretch reads MLLGQKSQRY…GPSTSPDPAH (103 aa). Residues 112–311 enclose the MAGE domain; that stretch reads LDEKVAELVR…ISYPSLHEEA (200 aa).

As to expression, expressed in many tumors of several types, such as melanoma, head and neck squamous cell carcinoma, lung carcinoma and breast carcinoma, but not in normal tissues except for testis and placenta.

In terms of biological role, not known, though may play a role in embryonal development and tumor transformation or aspects of tumor progression. The polypeptide is Melanoma-associated antigen 8 (MAGEA8) (Homo sapiens (Human)).